The following is a 150-amino-acid chain: Phosphopantetheine adenylyltransferase (150 aa).

S10 is a binding site for substrate. ATP contacts are provided by residues 10–11 (SF) and H18. The substrate site is built by K42, T74, and R88. ATP is bound by residues 89–91 (GLR), E99, and 124–130 (LAYISSS).

Belongs to the bacterial CoaD family. In terms of assembly, homohexamer. Mg(2+) is required as a cofactor.

It is found in the cytoplasm. It carries out the reaction (R)-4'-phosphopantetheine + ATP + H(+) = 3'-dephospho-CoA + diphosphate. Its pathway is cofactor biosynthesis; coenzyme A biosynthesis; CoA from (R)-pantothenate: step 4/5. Functionally, reversibly transfers an adenylyl group from ATP to 4'-phosphopantetheine, yielding dephospho-CoA (dPCoA) and pyrophosphate. The protein is Phosphopantetheine adenylyltransferase of Cytophaga hutchinsonii (strain ATCC 33406 / DSM 1761 / CIP 103989 / NBRC 15051 / NCIMB 9469 / D465).